A 216-amino-acid polypeptide reads, in one-letter code: NADH-quinone oxidoreductase subunit C (216 aa).

The protein belongs to the complex I 30 kDa subunit family. As to quaternary structure, NDH-1 is composed of 14 different subunits. Subunits NuoB, C, D, E, F, and G constitute the peripheral sector of the complex.

The protein localises to the cell inner membrane. The catalysed reaction is a quinone + NADH + 5 H(+)(in) = a quinol + NAD(+) + 4 H(+)(out). NDH-1 shuttles electrons from NADH, via FMN and iron-sulfur (Fe-S) centers, to quinones in the respiratory chain. The immediate electron acceptor for the enzyme in this species is believed to be ubiquinone. Couples the redox reaction to proton translocation (for every two electrons transferred, four hydrogen ions are translocated across the cytoplasmic membrane), and thus conserves the redox energy in a proton gradient. The polypeptide is NADH-quinone oxidoreductase subunit C (Francisella tularensis subsp. tularensis (strain FSC 198)).